Reading from the N-terminus, the 235-residue chain is Orotidine 5'-phosphate decarboxylase (235 aa).

Residues D10, K33, 60-69 (DLKMHDIPNT), T123, R185, Q194, G214, and R215 contribute to the substrate site. K62 serves as the catalytic Proton donor.

Belongs to the OMP decarboxylase family. Type 1 subfamily. In terms of assembly, homodimer.

It carries out the reaction orotidine 5'-phosphate + H(+) = UMP + CO2. It participates in pyrimidine metabolism; UMP biosynthesis via de novo pathway; UMP from orotate: step 2/2. In terms of biological role, catalyzes the decarboxylation of orotidine 5'-monophosphate (OMP) to uridine 5'-monophosphate (UMP). The chain is Orotidine 5'-phosphate decarboxylase from Lactobacillus acidophilus (strain ATCC 700396 / NCK56 / N2 / NCFM).